The primary structure comprises 267 residues: Palmitoyltransferase ZDHHC12 (267 aa).

Residues Met-1 to Pro-9 lie on the Cytoplasmic side of the membrane. The chain crosses the membrane as a helical span at residues Gly-10–Leu-30. Topologically, residues His-31–Glu-43 are lumenal. A helical membrane pass occupies residues Leu-44 to Val-64. Topologically, residues Ser-65 to Pro-140 are cytoplasmic. Residues Arg-97–Ala-147 form the DHHC domain. Catalysis depends on Cys-127, which acts as the S-palmitoyl cysteine intermediate. The chain crosses the membrane as a helical span at residues Leu-141–Trp-161. The Lumenal segment spans residues Ser-162–Gly-178. The helical transmembrane segment at Leu-179 to Val-199 threads the bilayer. Topologically, residues Ser-200–Val-267 are cytoplasmic.

It belongs to the DHHC palmitoyltransferase family. Widely expressed.

The protein resides in the golgi apparatus membrane. It is found in the endoplasmic reticulum membrane. It carries out the reaction L-cysteinyl-[protein] + hexadecanoyl-CoA = S-hexadecanoyl-L-cysteinyl-[protein] + CoA. Palmitoyltransferase that catalyzes the addition of palmitate onto various protein substrates. Has a palmitoyltransferase activity toward gephyrin/GPHN, regulating its clustering at synapses and its function in gamma-aminobutyric acid receptor clustering. Thereby, indirectly regulates GABAergic synaptic transmission. Negatively regulates NLRP3-driven inflammation. Catalyzes NLRP3 palmitoylation, leading to its degradation via the chaperone-mediated autophagy (CMA) process. In Homo sapiens (Human), this protein is Palmitoyltransferase ZDHHC12.